A 677-amino-acid polypeptide reads, in one-letter code: Envelope glycoprotein (677 aa).

A signal peptide spans Met1–Ser33. Residues Met34–Gln651 lie on the Extracellular side of the membrane. Asn41 is a glycosylation site (N-linked (GlcNAc...) asparagine; by host). Cystine bridges form between Cys54–Cys610, Cys109–Cys136, Cys122–Cys148, Cys512–Cys557, and Cys602–Cys609. The interval Arg55–Glu202 is receptor-binding. Asn205, Asn239, Asn258, Asn269, Asn297, Asn317, Asn318, Asn339, Asn406, Asn420, Asn435, and Asn463 each carry an N-linked (GlcNAc...) asparagine; by host glycan. The mucin-like region stretch occupies residues Asn306–Thr486. Over residues His315–Gly326 the composition is skewed to polar residues. 3 disordered regions span residues His315–Pro349, Asn370–Phe482, and Lys489–Thr508. Composition is skewed to polar residues over residues Asn370 to Glu421 and Asn429 to Gly472. A fusion peptide region spans residues Gly525–Ala540. Positions Leu555–Gln596 form a coiled coil. The N-linked (GlcNAc...) asparagine; by host glycan is linked to Asn564. The stretch at Trp616 to Pro635 forms a coiled coil. N-linked (GlcNAc...) asparagine; by host glycosylation is present at Asn619. A helical transmembrane segment spans residues Trp652–Ile672. Residues Cys671 and Cys673 are each lipidated (S-palmitoyl cysteine; by host). Topologically, residues Cys673–Cys677 are cytoplasmic.

The protein belongs to the filoviruses glycoprotein family. In terms of assembly, homotrimer; each monomer consists of a GP1 and a GP2 subunit linked by disulfide bonds. The resulting peplomers (GP1,2) protrude from the virus surface as spikes. Interacts with host integrin alpha-V/ITGAV. Interacts with host CLEC10A. Binds also to host CD209 and CLEC4M/DC-SIGN(R). Interacts with host FOLR1. Interacts with BST2; this interaction inhibits the antiviral effect of BST2 and this allows viral release from infected cells. Interacts with host FCN1; this interaction enhances viral entry. Interacts with host TLR4; this interaction induces cell death in T-lymphocytes or proinflammatory cytokines and SOCS1 production in monocytes. As to quaternary structure, interacts with host entry receptor NPC1. GP1 and GP2delta are part of GP1,2delta soluble complexes released by ectodomain shedding. In terms of processing, the signal peptide region modulates GP's high mannose glycosylation, thereby determining the efficiency of the interactions with DC-SIGN(R). Post-translationally, N-glycosylated. O-glycosylated in the mucin-like region. In terms of processing, palmitoylation of GP2 is not required for its function. Post-translationally, specific enzymatic cleavages in vivo yield mature proteins. The precursor is processed into GP1 and GP2 by host cell furin in the trans Golgi, and maybe by other host proteases, to yield the mature GP1 and GP2 proteins. The cleavage site corresponds to the furin optimal cleavage sequence [KR]-X-[KR]-R. This cleavage does not seem to be required for function. After the internalization of the virus into cell endosomes, GP1 C-terminus is removed by the endosomal proteases cathepsin B, cathepsin L, or both, leaving a 19-kDa N-terminal fragment which is further digested by cathepsin B. Proteolytic processing of GP1,2 by host ADAM17 can remove the transmembrane anchor of GP2 and leads to shedding of complexes consisting in GP1 and truncated GP2 (GP1,2delta).

It localises to the virion membrane. The protein localises to the host cell membrane. The protein resides in the secreted. Functionally, trimeric GP1,2 complexes form the virion surface spikes and mediate the viral entry processes, with GP1 acting as the receptor-binding subunit and GP2 as the membrane fusion subunit. At later times of infection, down-regulates the expression of various host cell surface molecules that are essential for immune surveillance and cell adhesion. Down-modulates several integrins including ITGA1, ITGA2, ITGA3, ITGA4, ITGA5, ITGA6, ITGAV and ITGB1. This decrease in cell adhesion molecules may lead to cell detachment, contributing to the disruption of blood vessel integrity and hemorrhages developed during infection (cytotoxicity). Interacts with host TLR4 and thereby stimulates the differentiation and activation of monocytes leading to bystander death of T-lymphocytes. Down-regulates as well the function of host natural killer cells. Counteracts the antiviral effect of host BST2/tetherin that restricts release of progeny virions from infected cells. However, cooperates with VP40 and host BST2 to activate canonical NF-kappa-B pathway in a manner dependent on neddylation. Its function is as follows. Functions as a decoy for anti-GP1,2 antibodies thereby contributing to viral immune evasion. Interacts and activates host macrophages and dendritic cells inducing up-regulation of cytokine transcription. This effect is mediated throught activation of host TLR4. Responsible for binding to the receptor(s) on target cells. Interacts with CD209/DC-SIGN and CLEC4M/DC-SIGNR which act as cofactors for virus entry into dendritic cells (DCs) and endothelial cells. Binding to the macrophage specific lectin CLEC10A also seems to enhance virus infectivity. Interaction with FOLR1/folate receptor alpha may be a cofactor for virus entry in some cell types, although results are contradictory. Members of the Tyro3 receptor tyrosine kinase family also seem to be cell entry factors in filovirus infection. Once attached, the virions are internalized through clathrin-dependent endocytosis and/or macropinocytosis. After internalization of the virus into the endosomes of the host cell, proteolysis of GP1 by two cysteine proteases, CTSB/cathepsin B and CTSL/cathepsin L removes the glycan cap and allows GP1 binding to the host entry receptor NPC1. NPC1-binding, Ca(2+) and acidic pH induce a conformational change of GP2, which unmasks its fusion peptide and permit membranes fusion. In terms of biological role, acts as a class I viral fusion protein. Under the current model, the protein has at least 3 conformational states: pre-fusion native state, pre-hairpin intermediate state, and post-fusion hairpin state. During viral and target cell membrane fusion, the coiled coil regions (heptad repeats) assume a trimer-of-hairpins structure, positioning the fusion peptide in close proximity to the C-terminal region of the ectodomain. The formation of this structure appears to drive apposition and subsequent fusion of viral and target cell membranes. Responsible for penetration of the virus into the cell cytoplasm by mediating the fusion of the membrane of the endocytosed virus particle with the endosomal membrane. Low pH in endosomes induces an irreversible conformational change in GP2, releasing the fusion hydrophobic peptide. The sequence is that of Envelope glycoprotein (GP) from Homo sapiens (Human).